An 869-amino-acid polypeptide reads, in one-letter code: Valine--tRNA ligase (869 aa).

The 'HIGH' region motif lies at 51 to 61 (PNVTGNLHLGH). The short motif at 523 to 527 (KMSKS) is the 'KMSKS' region element. Position 526 (lysine 526) interacts with ATP. A coiled-coil region spans residues 797 to 869 (EDLLGSNNEA…ELEKLLSSHK (73 aa)).

The protein belongs to the class-I aminoacyl-tRNA synthetase family. ValS type 1 subfamily. As to quaternary structure, monomer.

It is found in the cytoplasm. It catalyses the reaction tRNA(Val) + L-valine + ATP = L-valyl-tRNA(Val) + AMP + diphosphate. Catalyzes the attachment of valine to tRNA(Val). As ValRS can inadvertently accommodate and process structurally similar amino acids such as threonine, to avoid such errors, it has a 'posttransfer' editing activity that hydrolyzes mischarged Thr-tRNA(Val) in a tRNA-dependent manner. The polypeptide is Valine--tRNA ligase (Malacoplasma penetrans (strain HF-2) (Mycoplasma penetrans)).